The primary structure comprises 348 residues: N-formyl peptide receptor 2 (348 aa).

A glycan (N-linked (GlcNAc...) asparagine) is linked at asparagine 1. Residues 1 to 24 are Extracellular-facing; it reads NFSTPLNEHEEVSYESAGYTVLQI. Residues 25-47 traverse the membrane as a helical segment; it reads LPLVVLGVTFVLGVLGNGLVIWV. Topologically, residues 48–58 are cytoplasmic; it reads AGFRMTRTVTT. A helical transmembrane segment spans residues 59 to 80; it reads ICYLNLPLADFSFTATLPFLIV. Over 81-97 the chain is Extracellular; it reads SMAMGEKWPFGWFLCKL. Cysteine 95 and cysteine 173 are disulfide-bonded. The helical transmembrane segment at 98-118 threads the bilayer; that stretch reads IHIVVDINLFGSVFLIGFIAL. The Cytoplasmic portion of the chain corresponds to 119-137; it reads DRCICVLHPVWAQNHRTVS. Residues 138 to 159 form a helical membrane-spanning segment; the sequence is LAMKVIIGPWILALVLTLPVFL. The Extracellular portion of the chain corresponds to 160–202; it reads FLTTVTIPNGDTYCTFNFASWGGTPEERKNVAITMLTARGIIR. Residues 203 to 223 form a helical membrane-spanning segment; sequence FVIGFSMPMSIVAICYGLIAA. The Cytoplasmic portion of the chain corresponds to 224-239; it reads KIHKKGMIKSSRPLRV. Residues 240–263 form a helical membrane-spanning segment; sequence LTAVVASFFICWFPFQLVALLSTV. At 264 to 283 the chain is on the extracellular side; that stretch reads WLKEMLFYGKYKIINILVNP. The chain crosses the membrane as a helical span at residues 284–303; sequence TSSLAFFNSCLNPMLYVFVG. Over 304 to 348 the chain is Cytoplasmic; sequence QDFRERLIRSLPTSLERALSEDSAPTNDTAAKCASPPAETELQAM. The disordered stretch occupies residues 323-348; the sequence is SEDSAPTNDTAAKCASPPAETELQAM.

This sequence belongs to the G-protein coupled receptor 1 family. Interacts with APP; the interaction takes place at the cell surface and the complex is then rapidly internalized.

Its subcellular location is the cell membrane. Its function is as follows. Low affinity receptor for N-formyl-methionyl peptides, which are powerful neutrophil chemotactic factors. Binding of FMLP to the receptor causes activation of neutrophils. This response is mediated via a G-protein that activates a phosphatidylinositol-calcium second messenger system. Receptor for the chemokine-like protein FAM19A5, mediating FAM19A5-stimulated macrophage chemotaxis and the inhibitory effect on TNFSF11/RANKL-induced osteoclast differentiation. The polypeptide is N-formyl peptide receptor 2 (FPR2) (Pongo pygmaeus (Bornean orangutan)).